The primary structure comprises 48 residues: uncharacterized protein (48 aa).

This is an uncharacterized protein from Saccharomyces cerevisiae (strain ATCC 204508 / S288c) (Baker's yeast).